Consider the following 382-residue polypeptide: Succinate--CoA ligase [ADP-forming] subunit beta (382 aa).

An ATP-grasp domain is found at 9-240 (KELFSKYGVK…PRDVTEFEAY (232 aa)). Residues lysine 45, 52–54 (GRG), valine 94, and glutamate 99 each bind ATP. Positions 193 and 207 each coordinate Mg(2+). Substrate is bound by residues asparagine 260 and 317 to 319 (GIT).

The protein belongs to the succinate/malate CoA ligase beta subunit family. Heterotetramer of two alpha and two beta subunits. Mg(2+) serves as cofactor.

It catalyses the reaction succinate + ATP + CoA = succinyl-CoA + ADP + phosphate. It carries out the reaction GTP + succinate + CoA = succinyl-CoA + GDP + phosphate. It functions in the pathway carbohydrate metabolism; tricarboxylic acid cycle; succinate from succinyl-CoA (ligase route): step 1/1. In terms of biological role, succinyl-CoA synthetase functions in the citric acid cycle (TCA), coupling the hydrolysis of succinyl-CoA to the synthesis of either ATP or GTP and thus represents the only step of substrate-level phosphorylation in the TCA. The beta subunit provides nucleotide specificity of the enzyme and binds the substrate succinate, while the binding sites for coenzyme A and phosphate are found in the alpha subunit. This chain is Succinate--CoA ligase [ADP-forming] subunit beta, found in Pyrobaculum aerophilum (strain ATCC 51768 / DSM 7523 / JCM 9630 / CIP 104966 / NBRC 100827 / IM2).